A 340-amino-acid polypeptide reads, in one-letter code: DNA repair protein RAD51 homolog A (340 aa).

The segment covering 1–14 has biased composition (low complexity); sequence MSSAAQQQQKAAAA. The tract at residues 1–21 is disordered; that stretch reads MSSAAQQQQKAAAAEQEEVEH. Residues 49-78 enclose the HhH domain; that stretch reads TVEAVAYTPRKDLLQIKGISEAKADKIIEA. An ATP-binding site is contributed by 128–135; it reads GEFRSGKT.

The protein belongs to the RecA family. RAD51 subfamily. In terms of assembly, self-associates and may interact with XRCC3 homolog. Highly expressed in mitotic and meiotic tissues, but low levels in differentiated tissues.

It localises to the nucleus. Its function is as follows. Binds to single and double-stranded DNA and exhibits DNA-dependent ATPase activity. Unwinds duplex DNA. Component of the meiotic recombination pathway. Seems to play a role in mediating chromosome homology search, chromosome pairing and synapsis at early stages and probably chromosome crossing-over at later stages in meiosis. Probably is involved in the repair of meiotic double strand breaks (DBSs) and in homologous recombination. This Zea mays (Maize) protein is DNA repair protein RAD51 homolog A (RAD51A).